The sequence spans 333 residues: Phosphoribosylformylglycinamidine cyclo-ligase (333 aa).

It belongs to the AIR synthase family.

Its subcellular location is the cytoplasm. It catalyses the reaction 2-formamido-N(1)-(5-O-phospho-beta-D-ribosyl)acetamidine + ATP = 5-amino-1-(5-phospho-beta-D-ribosyl)imidazole + ADP + phosphate + H(+). It functions in the pathway purine metabolism; IMP biosynthesis via de novo pathway; 5-amino-1-(5-phospho-D-ribosyl)imidazole from N(2)-formyl-N(1)-(5-phospho-D-ribosyl)glycinamide: step 2/2. This chain is Phosphoribosylformylglycinamidine cyclo-ligase, found in Methanosarcina acetivorans (strain ATCC 35395 / DSM 2834 / JCM 12185 / C2A).